A 111-amino-acid chain; its full sequence is Nucleoid-associated protein CYA_1369 (111 aa).

Belongs to the YbaB/EbfC family. Homodimer.

It is found in the cytoplasm. Its subcellular location is the nucleoid. Functionally, binds to DNA and alters its conformation. May be involved in regulation of gene expression, nucleoid organization and DNA protection. The sequence is that of Nucleoid-associated protein CYA_1369 from Synechococcus sp. (strain JA-3-3Ab) (Cyanobacteria bacterium Yellowstone A-Prime).